The chain runs to 1088 residues: Sterol regulatory element-binding protein 2 (1088 aa).

The interval 1-38 (METLTELGDELTLGDIDEMLQFVSNQVGEFPDLFEEQL) is transcriptional activation (acidic). Residues 1-440 (METLTELGDE…TGLGMMDRSR (440 aa)) are Cytoplasmic-facing. A compositionally biased stretch (polar residues) spans 59–70 (AAQQPYTTSAPQ). A disordered region spans residues 59–87 (AAQQPYTTSAPQPQLLPVKAPPQATPQRT). The region spanning 290–340 (ERRTTHNIIEKRYRSSINDKIMELKDLVMGTDAKMHKSGVLKKAIDYIKYL) is the bHLH domain. The segment at 340–361 (LQQVNQKLRQENMALKLANQKN) is leucine-zipper. The tract at residues 392 to 431 (SPPASDSGSPAVFSPYSVDSEPGSPLLDDEKVKDEPDSPT) is disordered. A helical transmembrane segment spans residues 441–461 (MLLCTMTFLCLSFNPLTSLLH). The Lumenal portion of the chain corresponds to 462-494 (PESGQYSERAVQHGTGRTMLGVEMSGFYGSWFD). A helical transmembrane segment spans residues 495–515 (WLIPTIILWLVNGVIVLSVFM). The Cytoplasmic segment spans residues 516 to 1088 (KLLIHGEPVT…LSGGTAMAAS (573 aa)).

Belongs to the SREBP family. As to quaternary structure, forms a tight complex with scap, the SCAP-SREBP complex, in the endoplasmic reticulum membrane. In terms of assembly, homodimer; efficient DNA binding of the soluble transcription factor fragment requires dimerization with another bHLH protein. Processed in the Golgi apparatus, releasing the protein from the membrane. At low cholesterol the SCAP-SREBP complex is recruited into COPII vesicles for export from the endoplasmic reticulum. In the Golgi, complex SREBPs are cleaved sequentially by site-1 (MBTPS1, S1P) and site-2 (MBTPS2, S2P) proteases. The first cleavage by site-1 protease occurs within the luminal loop, the second cleavage by site-2 protease occurs within the first transmembrane domain, releasing the transcription factor from the Golgi membrane.

It is found in the endoplasmic reticulum membrane. The protein resides in the golgi apparatus membrane. The protein localises to the cytoplasmic vesicle. Its subcellular location is the COPII-coated vesicle membrane. It localises to the nucleus. Precursor of the transcription factor form (Processed sterol regulatory element-binding protein 2), which is embedded in the endoplasmic reticulum membrane. Low sterol concentrations promote processing of this form, releasing the transcription factor form that translocates into the nucleus and activates transcription of genes involved in cholesterol biosynthesis. Functionally, key transcription factor that regulates expression of genes involved in cholesterol biosynthesis. Binds to the sterol regulatory element 1 (SRE-1) (5'-ATCACCCCAC-3'). Has dual sequence specificity binding to both an E-box motif (5'-ATCACGTGA-3') and to SRE-1 (5'-ATCACCCCAC-3'). Regulates transcription of genes related to cholesterol synthesis pathway. The chain is Sterol regulatory element-binding protein 2 from Xenopus laevis (African clawed frog).